We begin with the raw amino-acid sequence, 422 residues long: MSDNGPQSNQRSAPRITFGGPTDSTDNNQNGGRNGARPKQRRPQGLPNNTASWFTALTQHGKEELRFPRGQGVPINTNSGPDDQIGYYRRATRRVRGGDGKMKELSPRWYFYYLGTGPEASLPYGANKEGIVWVATEGALNTPKDHIGTRNPNNNAATVLQLPQGTTLPKGFYAEGSRGGSQASSRSSSRSRGNSRNSTPGSSRGNSPARMASGGGETALALLLLDRLNQLESKVSGKGQQQQGQTVTKKSAAEASKKPRQKRTATKQYNVTQAFGRRGPEQTQGNFGDQDLIRQGTDYKHWPQIAQFAPSASAFFGMSRIGMEVTPSGTWLTYHGAIKLDDKDPQFKDNVILLNKHIDAYKTFPPTEPKKDKKKKTDEAQPLPQRQKKQPTVTLLPAADMDDFSRQLQNSMSGASADSTQA.

Composition is skewed to polar residues over residues 1–12 (MSDNGPQSNQRS) and 22–31 (TDSTDNNQNG). The tract at residues 1-52 (MSDNGPQSNQRSAPRITFGGPTDSTDNNQNGGRNGARPKQRRPQGLPNNTAS) is disordered. RNA-binding regions lie at residues 42-187 (RPQG…SSRS) and 45-181 (GLPN…RGGS). Residues 49–176 (NTASWFTALT…TLPKGFYAEG (128 aa)) form the CoV N NTD domain. Positions 93, 108, and 150 each coordinate RNA. Disordered regions lie at residues 167–214 (TLPK…MASG), 234–287 (KVSG…QGNF), and 362–422 (KTFP…STQA). At S177 the chain carries Phosphoserine; by host. Residues 177-204 (SRGGSQASSRSSSRSRGNSRNSTPGSSR) are SR region. 2 stretches are compositionally biased toward low complexity: residues 180–207 (GSQASSRSSSRSRGNSRNSTPGSSRGNS) and 234–250 (KVSGKGQQQQGQTVTKK). Residues 248–365 (TKKSAAEASK…KHIDAYKTFP (118 aa)) enclose the CoV N CTD domain. The Nuclear localization signal signature appears at 257–265 (KKPRQKRTA). The interval 259-362 (PRQKRTATKQ…LLNKHIDAYK (104 aa)) is dimerization. A compositionally biased stretch (basic and acidic residues) spans 368–379 (EPKKDKKKKTDE). Residues 406–422 (RQLQNSMSGASADSTQA) show a composition bias toward polar residues.

It belongs to the betacoronavirus nucleocapsid protein family. In terms of assembly, homooligomer. Both monomeric and oligomeric forms interact with RNA. Interacts with protein M. Interacts with protein E. May bind to host HNRNPA1. Interacts with NSP3; this interaction serves to tether the genome to the newly translated replicase-transcriptase complex at a very early stage of infection. May interact with host SMAD3. Interacts with host PPIA/CYPA. In terms of processing, proteolytically cleaved by host CASP6. The cleavage leads to two fragments and facilitates viral replication by inhibiting host IFN signaling. The two fragments may interact with IRF3 inhibiting its nuclear translocation after activation and reduce the expression of IFNB and IFN-stimulated genes. ADP-ribosylated. The ADP-ribosylation is retained in the virion during infection. Post-translationally, phosphorylated on serine and threonine residues. Phosphorylated by host GSK3A and GSK3B. Phosphorylation allows recruitment of host RNA helicase DDX1 which facilitates template readthrough and enables longer subgenomic mRNA synthesis. This promotes the solubility of homodimers that would otherwise aggregate. Host phosphatase would dephosphorylate the protein during assembly at M bound membranes.

The protein localises to the virion. Its subcellular location is the host endoplasmic reticulum-Golgi intermediate compartment. It is found in the host Golgi apparatus. The protein resides in the host cytoplasm. It localises to the host perinuclear region. The protein localises to the host nucleus. Packages the positive strand viral genome RNA into a helical ribonucleocapsid (RNP) and plays a fundamental role during virion assembly through its interactions with the viral genome and membrane protein M. Plays an important role in enhancing the efficiency of subgenomic viral RNA transcription as well as viral replication. May modulate transforming growth factor-beta signaling by binding host SMAD3. This is Nucleoprotein from Severe acute respiratory syndrome coronavirus (SARS-CoV).